A 191-amino-acid polypeptide reads, in one-letter code: Cilia- and flagella-associated protein 20 (191 aa).

The protein belongs to the CFAP20 family.

The protein localises to the cytoplasm. The protein resides in the cytoskeleton. Its subcellular location is the cilium basal body. It localises to the cell projection. It is found in the cilium. The protein localises to the cilium axoneme. Functionally, cilium- and flagellum-specific protein required for axonemal structure organization and motility. Microtubule inner protein (MIP) part of the dynein-decorated doublet microtubules (DMTs) in cilia axoneme, which is required for motile cilia beating. May also play a role in cortical organization of basal body. The polypeptide is Cilia- and flagella-associated protein 20 (CFAP20) (Paramecium tetraurelia).